The sequence spans 463 residues: tRNA modification GTPase MnmE (463 aa).

The (6S)-5-formyl-5,6,7,8-tetrahydrofolate site is built by Arg26, Glu88, and Arg127. The TrmE-type G domain occupies 224-383 (GLATAIIGRP…LEQRIAKMFF (160 aa)). Residue Asn234 coordinates K(+). GTP-binding positions include 234 to 239 (NVGKSS), 253 to 259 (TDVAGTT), and 278 to 281 (DTAG). Mg(2+) is bound at residue Ser238. K(+) contacts are provided by Thr253, Val255, and Thr258. A Mg(2+)-binding site is contributed by Thr259. A (6S)-5-formyl-5,6,7,8-tetrahydrofolate-binding site is contributed by Lys463.

The protein belongs to the TRAFAC class TrmE-Era-EngA-EngB-Septin-like GTPase superfamily. TrmE GTPase family. As to quaternary structure, homodimer. Heterotetramer of two MnmE and two MnmG subunits. It depends on K(+) as a cofactor.

The protein localises to the cytoplasm. Exhibits a very high intrinsic GTPase hydrolysis rate. Involved in the addition of a carboxymethylaminomethyl (cmnm) group at the wobble position (U34) of certain tRNAs, forming tRNA-cmnm(5)s(2)U34. This is tRNA modification GTPase MnmE from Lactiplantibacillus plantarum (strain ATCC BAA-793 / NCIMB 8826 / WCFS1) (Lactobacillus plantarum).